Reading from the N-terminus, the 147-residue chain is Allograft inflammatory factor 1 (147 aa).

Ser-2 carries the N-acetylserine modification. An N6-acetyllysine modification is found at Lys-11. A Phosphoserine modification is found at Ser-39. Positions 45-80 (SKLEAFKKKYMEFDLNEDGGIDIMSLKRMMEKLGVP) constitute an EF-hand 1 domain. Residues Asp-58, Asn-60, and Asp-62 each coordinate Ca(2+). The 35-residue stretch at 81–115 (KTHLELKKLIMEVSSGPGETFSYSDFLKMMLGKRS) folds into the EF-hand 2; degenerate domain. The segment at 128-147 (AREQEKPTGLPAKKAISELP) is disordered.

Phosphorylated on serine residues.

It localises to the cytoplasm. It is found in the cytoskeleton. The protein resides in the cell projection. Its subcellular location is the ruffle membrane. The protein localises to the phagocytic cup. Its function is as follows. May play a role in macrophage activation and function. This Bos taurus (Bovine) protein is Allograft inflammatory factor 1 (AIF1).